The sequence spans 320 residues: tRNA U34 carboxymethyltransferase (320 aa).

Carboxy-S-adenosyl-L-methionine contacts are provided by residues lysine 89, tryptophan 103, lysine 108, glycine 128, 150–152, 179–180, methionine 194, tyrosine 198, and arginine 313; these read DPT and IE.

The protein belongs to the class I-like SAM-binding methyltransferase superfamily. CmoB family. As to quaternary structure, homotetramer.

It catalyses the reaction carboxy-S-adenosyl-L-methionine + 5-hydroxyuridine(34) in tRNA = 5-carboxymethoxyuridine(34) in tRNA + S-adenosyl-L-homocysteine + H(+). Its function is as follows. Catalyzes carboxymethyl transfer from carboxy-S-adenosyl-L-methionine (Cx-SAM) to 5-hydroxyuridine (ho5U) to form 5-carboxymethoxyuridine (cmo5U) at position 34 in tRNAs. The protein is tRNA U34 carboxymethyltransferase of Actinobacillus pleuropneumoniae serotype 3 (strain JL03).